The sequence spans 421 residues: Divalent metal cation transporter MntH (421 aa).

A run of 11 helical transmembrane segments spans residues 27–47 (LGPA…ATNI), 51–71 (SLFD…AIFL), 100–120 (WFLW…EFLG), 128–148 (LFHI…FAIV), 160–180 (GIIF…LFIA), 201–221 (AMLI…IYLH), 248–268 (ILVA…VSAA), 289–309 (PLLG…SGFS), 337–357 (LVTM…LKSL), 358–378 (IVSQ…LLLI), and 396–416 (IMGV…LYLT).

This sequence belongs to the NRAMP family.

The protein localises to the cell membrane. Functionally, h(+)-stimulated, divalent metal cation uptake system. This chain is Divalent metal cation transporter MntH, found in Caldanaerobacter subterraneus subsp. tengcongensis (strain DSM 15242 / JCM 11007 / NBRC 100824 / MB4) (Thermoanaerobacter tengcongensis).